Reading from the N-terminus, the 246-residue chain is Probable transcriptional regulatory protein CLJ_B3338 (246 aa).

This sequence belongs to the TACO1 family.

The protein resides in the cytoplasm. This is Probable transcriptional regulatory protein CLJ_B3338 from Clostridium botulinum (strain 657 / Type Ba4).